Consider the following 485-residue polypeptide: uncharacterized protein (485 aa).

3 helical membrane-spanning segments follow: residues 284–304 (LLAL…YPLF), 328–348 (LLDL…SFIK), and 353–373 (LALT…YNCL).

The protein belongs to the CBF/MAK21 family.

The protein localises to the membrane. This is an uncharacterized protein from Schizosaccharomyces pombe (strain 972 / ATCC 24843) (Fission yeast).